The chain runs to 743 residues: FHF complex subunit HOOK-interacting protein 2B (743 aa).

Residues 186–219 (CGEPTALPKDTTSHGDKDCSHDGAPARPQLDGES) form a disordered region. Residues 196–206 (TTSHGDKDCSH) show a composition bias toward basic and acidic residues.

The protein belongs to the FHIP family. Expressed in liver.

Its function is as follows. Able to activate MAPK/ERK and TGFB signaling pathways. May regulate the activity of genes involved in intestinal barrier function and immunoprotective inflammation. May play a role in cell proliferation. This Homo sapiens (Human) protein is FHF complex subunit HOOK-interacting protein 2B.